The chain runs to 260 residues: Adenosylcobinamide-GDP ribazoletransferase (260 aa).

8 consecutive transmembrane segments (helical) span residues 3-23 (APLW…LPAW), 36-56 (FAPW…LVLI), 60-80 (WPTS…SGGL), 108-128 (VGAS…ASLL), 133-153 (LAPL…LWAM), 180-200 (ALPA…LMIV), 206-226 (MVLM…PELL), and 239-259 (GASV…LLPA).

Belongs to the CobS family. Mg(2+) is required as a cofactor.

The protein resides in the cell inner membrane. It catalyses the reaction alpha-ribazole + adenosylcob(III)inamide-GDP = adenosylcob(III)alamin + GMP + H(+). The enzyme catalyses alpha-ribazole 5'-phosphate + adenosylcob(III)inamide-GDP = adenosylcob(III)alamin 5'-phosphate + GMP + H(+). Its pathway is cofactor biosynthesis; adenosylcobalamin biosynthesis; adenosylcobalamin from cob(II)yrinate a,c-diamide: step 7/7. Its function is as follows. Joins adenosylcobinamide-GDP and alpha-ribazole to generate adenosylcobalamin (Ado-cobalamin). Also synthesizes adenosylcobalamin 5'-phosphate from adenosylcobinamide-GDP and alpha-ribazole 5'-phosphate. The protein is Adenosylcobinamide-GDP ribazoletransferase of Prochlorococcus marinus (strain MIT 9313).